The sequence spans 92 residues: Small ribosomal subunit protein uS19 (92 aa).

The protein belongs to the universal ribosomal protein uS19 family.

Protein S19 forms a complex with S13 that binds strongly to the 16S ribosomal RNA. This is Small ribosomal subunit protein uS19 from Psychromonas ingrahamii (strain DSM 17664 / CCUG 51855 / 37).